Here is a 424-residue protein sequence, read N- to C-terminus: Pachytene checkpoint protein 2 homolog (424 aa).

An ATP-binding site is contributed by 171-178; that stretch reads GPPGTGKT.

It belongs to the AAA ATPase family. PCH2 subfamily.

Plays a key role in chromosome recombination and chromosome structure development during meiosis. Required at early steps in meiotic recombination that leads to non-crossovers pathways. Also needed for efficient completion of homologous synapsis by influencing crossover distribution along the chromosomes affecting both crossovers and non-crossovers pathways. This Danio rerio (Zebrafish) protein is Pachytene checkpoint protein 2 homolog (trip13).